Reading from the N-terminus, the 305-residue chain is GMP synthase [glutamine-hydrolyzing] subunit B (305 aa).

The GMPS ATP-PPase domain occupies Val2 to Arg184. ATP is bound at residue Ser29 to Ser35.

As to quaternary structure, heterodimer composed of a glutamine amidotransferase subunit (A) and a GMP-binding subunit (B).

The catalysed reaction is XMP + L-glutamine + ATP + H2O = GMP + L-glutamate + AMP + diphosphate + 2 H(+). It functions in the pathway purine metabolism; GMP biosynthesis; GMP from XMP (L-Gln route): step 1/1. In terms of biological role, catalyzes the synthesis of GMP from XMP. The sequence is that of GMP synthase [glutamine-hydrolyzing] subunit B (guaAB) from Methanosarcina acetivorans (strain ATCC 35395 / DSM 2834 / JCM 12185 / C2A).